Here is a 269-residue protein sequence, read N- to C-terminus: RBPJ-interacting and tubulin-associated protein 1 (269 aa).

Residues 5 to 17 carry the Nuclear export signal motif; the sequence is VELAISGMQTLHV. 2 disordered regions span residues 67–94 and 145–269; these read GTGV…TLTP and PATP…PPWK. Over residues 79-93 the composition is skewed to low complexity; that stretch reads SCESTSSSGSTPTLT. Positions 92-108 match the Nuclear localization signal motif; that stretch reads LTPRKKNKYRLISHTPS. The segment at 128–156 is interaction with RBPJ/RBPSUH; sequence WMARGDAAKLHALFWTPPATPRGSHSPRP. The segment at 156 to 269 is interaction with tubulin; sequence PRETPVRCVH…ATQKTKPPWK (114 aa). Composition is skewed to polar residues over residues 202 to 220 and 247 to 269; these read LTHP…SPCT and VSVS…PPWK.

Belongs to the RITA family. Interacts with RBPJ/RBPSUH.

Its subcellular location is the cytoplasm. The protein resides in the nucleus. It is found in the cytoskeleton. It localises to the microtubule organizing center. The protein localises to the centrosome. Its function is as follows. Tubulin-binding protein that acts as a negative regulator of Notch signaling pathway. Shuttles between the cytoplasm and the nucleus and mediates the nuclear export of RBPJ/RBPSUH, thereby preventing the interaction between RBPJ/RBPSUH and NICD product of Notch proteins (Notch intracellular domain), leading to down-regulate Notch-mediated transcription. May play a role in neurogenesis. The protein is RBPJ-interacting and tubulin-associated protein 1 (RITA1) of Bos taurus (Bovine).